The chain runs to 152 residues: Nucleoside diphosphate kinase (152 aa).

ATP-binding residues include Lys-11, Phe-59, Arg-87, Thr-93, Arg-104, and Asn-114. The Pros-phosphohistidine intermediate role is filled by His-117.

It belongs to the NDK family. As to quaternary structure, homotetramer. Mg(2+) is required as a cofactor.

The protein resides in the cytoplasm. It catalyses the reaction a 2'-deoxyribonucleoside 5'-diphosphate + ATP = a 2'-deoxyribonucleoside 5'-triphosphate + ADP. The enzyme catalyses a ribonucleoside 5'-diphosphate + ATP = a ribonucleoside 5'-triphosphate + ADP. Its function is as follows. Major role in the synthesis of nucleoside triphosphates other than ATP. The ATP gamma phosphate is transferred to the NDP beta phosphate via a ping-pong mechanism, using a phosphorylated active-site intermediate. The polypeptide is Nucleoside diphosphate kinase (Prochlorococcus marinus (strain MIT 9215)).